The following is a 474-amino-acid chain: UDP-N-acetylmuramate--L-alanine ligase (474 aa).

123–129 is a binding site for ATP; the sequence is GTHGKTT.

This sequence belongs to the MurCDEF family.

The protein resides in the cytoplasm. It catalyses the reaction UDP-N-acetyl-alpha-D-muramate + L-alanine + ATP = UDP-N-acetyl-alpha-D-muramoyl-L-alanine + ADP + phosphate + H(+). The protein operates within cell wall biogenesis; peptidoglycan biosynthesis. Cell wall formation. The sequence is that of UDP-N-acetylmuramate--L-alanine ligase from Alcanivorax borkumensis (strain ATCC 700651 / DSM 11573 / NCIMB 13689 / SK2).